Reading from the N-terminus, the 820-residue chain is Phenylalanine--tRNA ligase beta subunit (820 aa).

Residues 42-154 (KGGLEGLVIG…EDAVPGTLAK (113 aa)) enclose the tRNA-binding domain. The B5 domain occupies 413 to 489 (AQDFIVELTY…RIYGYNNVEI (77 aa)). Residues D467, D473, E476, and D477 each coordinate Mg(2+). The FDX-ACB domain maps to 727-820 (SKFPAVKRDL…LEDKLGAKLR (94 aa)).

The protein belongs to the phenylalanyl-tRNA synthetase beta subunit family. Type 1 subfamily. As to quaternary structure, tetramer of two alpha and two beta subunits. Requires Mg(2+) as cofactor.

The protein localises to the cytoplasm. It carries out the reaction tRNA(Phe) + L-phenylalanine + ATP = L-phenylalanyl-tRNA(Phe) + AMP + diphosphate + H(+). The sequence is that of Phenylalanine--tRNA ligase beta subunit from Bacteroides fragilis (strain ATCC 25285 / DSM 2151 / CCUG 4856 / JCM 11019 / LMG 10263 / NCTC 9343 / Onslow / VPI 2553 / EN-2).